Here is a 362-residue protein sequence, read N- to C-terminus: Chorismate synthase (362 aa).

Positions 39 to 59 (ADLQGDLDRRKPGTSRYTTPR) are disordered. R48 and R54 together coordinate NADP(+). Residues 125 to 127 (RSS), 238 to 239 (NA), G278, 293 to 297 (KPTSS), and R319 each bind FMN.

Belongs to the chorismate synthase family. As to quaternary structure, homotetramer. FMNH2 serves as cofactor.

The enzyme catalyses 5-O-(1-carboxyvinyl)-3-phosphoshikimate = chorismate + phosphate. It participates in metabolic intermediate biosynthesis; chorismate biosynthesis; chorismate from D-erythrose 4-phosphate and phosphoenolpyruvate: step 7/7. In terms of biological role, catalyzes the anti-1,4-elimination of the C-3 phosphate and the C-6 proR hydrogen from 5-enolpyruvylshikimate-3-phosphate (EPSP) to yield chorismate, which is the branch point compound that serves as the starting substrate for the three terminal pathways of aromatic amino acid biosynthesis. This reaction introduces a second double bond into the aromatic ring system. The sequence is that of Chorismate synthase from Aeromonas hydrophila subsp. hydrophila (strain ATCC 7966 / DSM 30187 / BCRC 13018 / CCUG 14551 / JCM 1027 / KCTC 2358 / NCIMB 9240 / NCTC 8049).